The chain runs to 758 residues: Vitamin K-dependent gamma-carboxylase (758 aa).

Residues 1 to 29 (MAVHRGSARAAPASDKVQKNKPAQTSGLE) form a disordered region. Residue Ala2 is modified to N-acetylalanine. Residues 2-60 (AVHRGSARAAPASDKVQKNKPAQTSGLEQGSRMARIFGFEWADLSSWQSVVTLLNRPTD) lie on the Cytoplasmic side of the membrane. A helical transmembrane segment spans residues 61–81 (PANLAVFRFLFAFLMLLDIPQ). Residues 82–113 (ERGLSSLDRKYLDGLDVCRFPLLDALRPLPLD) are Lumenal-facing. Cys99 and Cys450 form a disulfide bridge. Residues 114-134 (WMYLVYTIMFLGALGMMLGLW) traverse the membrane as a helical segment. Residues 135–136 (YR) lie on the Cytoplasmic side of the membrane. Residues 137–157 (LSCMLFLLPYWYVFLLDKTSW) traverse the membrane as a helical segment. Residues 158–292 (NNHSYLYGLL…VSYFHCMNSQ (135 aa)) are Lumenal-facing. Residues 293-313 (LFSIGMFPYVMLASSPLFCSA) form a helical membrane-spanning segment. Topologically, residues 314 to 361 (EWPRKLVARCPKRLQELLPAKAAPRPSASCVYKRARAKAGQKPGLRHH) are cytoplasmic. A helical transmembrane segment spans residues 362–382 (LGTVFTLLYLLEQLFLPYSHF). Residues 383–758 (LTQGYNNWTN…PDSEHVHSEL (376 aa)) lie on the Lumenal side of the membrane. The segment at 727–758 (PFEPVDESSASNTDSSDPHPSEPDSEHVHSEL) is disordered. Over residues 742–758 (SDPHPSEPDSEHVHSEL) the composition is skewed to basic and acidic residues.

This sequence belongs to the vitamin K-dependent gamma-carboxylase family. Monomer. Interacts with CALU.

The protein resides in the endoplasmic reticulum membrane. It catalyses the reaction 4-carboxy-L-glutamyl-[protein] + 2,3-epoxyphylloquinone + H2O + H(+) = phylloquinol + L-glutamyl-[protein] + CO2 + O2. Its function is as follows. Mediates the vitamin K-dependent carboxylation of glutamate residues to calcium-binding gamma-carboxyglutamate (Gla) residues with the concomitant conversion of the reduced hydroquinone form of vitamin K to vitamin K epoxide. Catalyzes gamma-carboxylation of various proteins, such as blood coagulation factors (F2, F7, F9 and F10), osteocalcin (BGLAP) or matrix Gla protein (MGP). The polypeptide is Vitamin K-dependent gamma-carboxylase (Ggcx) (Rattus norvegicus (Rat)).